The primary structure comprises 394 residues: 8-amino-7-oxononanoate synthase (394 aa).

Arginine 21 contacts substrate. Glycine 112 to tyrosine 113 lines the pyridoxal 5'-phosphate pocket. Histidine 137 is a substrate binding site. Positions 183, 211, and 239 each coordinate pyridoxal 5'-phosphate. Lysine 242 carries the N6-(pyridoxal phosphate)lysine modification. A substrate-binding site is contributed by threonine 358.

It belongs to the class-II pyridoxal-phosphate-dependent aminotransferase family. BioF subfamily. As to quaternary structure, homodimer. The cofactor is pyridoxal 5'-phosphate.

It catalyses the reaction 6-carboxyhexanoyl-[ACP] + L-alanine + H(+) = (8S)-8-amino-7-oxononanoate + holo-[ACP] + CO2. Its pathway is cofactor biosynthesis; biotin biosynthesis. Its function is as follows. Catalyzes the decarboxylative condensation of pimeloyl-[acyl-carrier protein] and L-alanine to produce 8-amino-7-oxononanoate (AON), [acyl-carrier protein], and carbon dioxide. The polypeptide is 8-amino-7-oxononanoate synthase (Burkholderia thailandensis (strain ATCC 700388 / DSM 13276 / CCUG 48851 / CIP 106301 / E264)).